Reading from the N-terminus, the 430-residue chain is Asparagine--tRNA ligase (430 aa).

Belongs to the class-II aminoacyl-tRNA synthetase family. In terms of assembly, homodimer.

The protein resides in the cytoplasm. It carries out the reaction tRNA(Asn) + L-asparagine + ATP = L-asparaginyl-tRNA(Asn) + AMP + diphosphate + H(+). The sequence is that of Asparagine--tRNA ligase from Bacillus velezensis (strain DSM 23117 / BGSC 10A6 / LMG 26770 / FZB42) (Bacillus amyloliquefaciens subsp. plantarum).